A 298-amino-acid chain; its full sequence is ATP synthase gamma chain (298 aa).

The protein belongs to the ATPase gamma chain family. As to quaternary structure, F-type ATPases have 2 components, CF(1) - the catalytic core - and CF(0) - the membrane proton channel. CF(1) has five subunits: alpha(3), beta(3), gamma(1), delta(1), epsilon(1). CF(0) has three main subunits: a, b and c.

The protein localises to the cell inner membrane. In terms of biological role, produces ATP from ADP in the presence of a proton gradient across the membrane. The gamma chain is believed to be important in regulating ATPase activity and the flow of protons through the CF(0) complex. This Francisella tularensis subsp. holarctica (strain LVS) protein is ATP synthase gamma chain.